We begin with the raw amino-acid sequence, 407 residues long: Transcriptional regulator alnR (407 aa).

The segment at residues 23-53 is a DNA-binding region (zn(2)-C6 fungal-type); sequence SCDTCQEAKVKCSQHKPSCHRCLRHRQPCVY. Residues 53–85 are disordered; sequence YSPQRRSGRPPKRPSPSSRLGPESNNSGDDIHN. The span at 75–85 shows a compositional bias: polar residues; that stretch reads ESNNSGDDIHN.

It localises to the nucleus. Its function is as follows. Transcriptional regulator involved in the positive regulation of the expression of the gene cluster that mediates the biosynthesis of asperlin, a polyketide showing anti-inflammatory, antitumor and antibiotic activities. The polypeptide is Transcriptional regulator alnR (Emericella nidulans (strain FGSC A4 / ATCC 38163 / CBS 112.46 / NRRL 194 / M139) (Aspergillus nidulans)).